Reading from the N-terminus, the 206-residue chain is Putative cryptic phosphonate transport system permease protein PhnE1 (206 aa).

Transmembrane regions (helical) follow at residues 30-50, 92-112, and 137-157; these read WFSL…WQGA, IAVW…LMSA, and MVFA…GVLA.

As to quaternary structure, if the reading frame is restored, the complex is composed of two ATP-binding proteins (PhnC), two transmembrane proteins (PhnE) and a solute-binding protein (PhnD).

The protein localises to the cell inner membrane. N-terminal fragment of the PhnE protein, part of a phosphonate usage operon that is cryptic in K12 strains. Growth of K12 strains on phosphonate can be observed when it is used as the sole phosphorus source after a 60 hour lag period, suggesting the operon is activated. An intact PhnE in strain B is (AC A0A140NFA3). Part of the binding-protein-dependent transport system for phosphonates; probably responsible for the translocation of the substrate across the membrane. The polypeptide is Putative cryptic phosphonate transport system permease protein PhnE1 (phnE1) (Escherichia coli (strain K12)).